A 1987-amino-acid polypeptide reads, in one-letter code: Transcriptional activator DEMETER (1987 aa).

Disordered stretches follow at residues 246-378 (TGHE…NKSP), 392-415 (DLEN…SSGA), and 793-901 (MPPE…GPSG). Polar residues predominate over residues 258–277 (SMQSIMDSSAVNATEATEQN). The span at 341-364 (ATQEKVKSKETGSAKKKNLKESAT) shows a compositional bias: basic and acidic residues. The span at 813-829 (NTASISKGASKGNSSPV) shows a compositional bias: polar residues. Over residues 844–855 (PAKKGRAGRKKS) the composition is skewed to basic residues. Positions 955–1054 (KVDIDDETTR…AFMSLAARFP (100 aa)) are DEMETER. Disordered regions lie at residues 1324–1351 (LPGM…QDEM) and 1439–1471 (TLAD…KNNM). 2 stretches are compositionally biased toward basic and acidic residues: residues 1338–1351 (EHQD…QDEM) and 1452–1469 (SLRK…RNKN). Residues Cys-1629, Cys-1636, Cys-1639, and Cys-1645 each contribute to the [4Fe-4S] cluster site.

The protein belongs to the DNA glycosylase family. DEMETER subfamily. It depends on [4Fe-4S] cluster as a cofactor. As to expression, mainly expressed in immature flower buds, then decreases as the flower matures. Expressed in the ovule carpels, but not expressed in pollen stamens. Expressed in developing and mature ovules (stages 12-14), then strongly decreases after fertilization.

Its subcellular location is the nucleus. Transcriptional activator involved in gene imprinting. Catalyzes the release of 5-methylcytosine (5-meC) from DNA by a glycosylase/lyase mechanism. Allows the expression of the maternal copy of the imprinted MEA gene before fertilization, possibly by antagonizing or suppressing DNA methylation on target promoter. Probably acts by nicking the MEA promoter. Required for stable reproducible patterns of floral and vegetative development. The chain is Transcriptional activator DEMETER (DME) from Arabidopsis thaliana (Mouse-ear cress).